A 337-amino-acid chain; its full sequence is MTPTVHTWPILETARTQVLEQGIGLTEDQLVEVLQLPDEALPQALELAHQVRLRHCGEDVEVEGIVSIKTGGCPEDCHFCSQSGLFDSPVRGVWLDIPELVKAAKETAATGATEFCIVAAVRGPDIKLMNQVKFAIGRINEEVDINIACSLGMLTQQQVDQLAGWGVHRYNHNLETARSFFPQVVTTHTYEERLETCAMVKAAGMELCCGALLGMGESLHQRAELAAQLAALEPHEVPLNFLNPRPGTPLENQGLMDGKDALRAIAAFRLAMPRTVLRYAGGRELTLGDLGTREGLLGGINAVIVGNYLTTLGRPATADLSLLVDLNMPIRELQKTL.

Residues E58–R283 enclose the Radical SAM core domain. Residues C73, C77, and C80 each coordinate [4Fe-4S] cluster. [2Fe-2S] cluster contacts are provided by C116, C149, C208, and R278.

The protein belongs to the radical SAM superfamily. Biotin synthase family. Homodimer. It depends on [4Fe-4S] cluster as a cofactor. [2Fe-2S] cluster serves as cofactor.

It catalyses the reaction (4R,5S)-dethiobiotin + (sulfur carrier)-SH + 2 reduced [2Fe-2S]-[ferredoxin] + 2 S-adenosyl-L-methionine = (sulfur carrier)-H + biotin + 2 5'-deoxyadenosine + 2 L-methionine + 2 oxidized [2Fe-2S]-[ferredoxin]. It functions in the pathway cofactor biosynthesis; biotin biosynthesis; biotin from 7,8-diaminononanoate: step 2/2. Its function is as follows. Catalyzes the conversion of dethiobiotin (DTB) to biotin by the insertion of a sulfur atom into dethiobiotin via a radical-based mechanism. This is Biotin synthase from Pseudarthrobacter chlorophenolicus (strain ATCC 700700 / DSM 12829 / CIP 107037 / JCM 12360 / KCTC 9906 / NCIMB 13794 / A6) (Arthrobacter chlorophenolicus).